We begin with the raw amino-acid sequence, 393 residues long: Protein TsgA (393 aa).

12 consecutive transmembrane segments (helical) span residues tryptophan 11 to methionine 31, phenylalanine 51 to proline 71, phenylalanine 78 to leucine 98, alanine 101 to isoleucine 121, leucine 134 to phenylalanine 154, tryptophan 162 to glycine 182, isoleucine 206 to isoleucine 226, alanine 245 to leucine 265, isoleucine 273 to glutamine 293, tryptophan 298 to glycine 318, phenylalanine 332 to valine 352, and leucine 361 to valine 381.

Belongs to the major facilitator superfamily. TsgA family.

It localises to the cell inner membrane. This Salmonella heidelberg (strain SL476) protein is Protein TsgA.